A 208-amino-acid chain; its full sequence is Adenylyl-sulfate kinase (208 aa).

35-42 (GLSGSGKS) contacts ATP. The active-site Phosphoserine intermediate is the S109.

This sequence belongs to the APS kinase family.

It catalyses the reaction adenosine 5'-phosphosulfate + ATP = 3'-phosphoadenylyl sulfate + ADP + H(+). The protein operates within sulfur metabolism; hydrogen sulfide biosynthesis; sulfite from sulfate: step 2/3. Functionally, catalyzes the synthesis of activated sulfate. The chain is Adenylyl-sulfate kinase from Geotalea uraniireducens (strain Rf4) (Geobacter uraniireducens).